The chain runs to 142 residues: Large ribosomal subunit protein uL13 (142 aa).

The protein belongs to the universal ribosomal protein uL13 family. As to quaternary structure, part of the 50S ribosomal subunit.

In terms of biological role, this protein is one of the early assembly proteins of the 50S ribosomal subunit, although it is not seen to bind rRNA by itself. It is important during the early stages of 50S assembly. This Shewanella denitrificans (strain OS217 / ATCC BAA-1090 / DSM 15013) protein is Large ribosomal subunit protein uL13.